The sequence spans 257 residues: Tryptophan synthase alpha chain (257 aa).

Residues E51 and D62 each act as proton acceptor in the active site.

It belongs to the TrpA family. As to quaternary structure, tetramer of two alpha and two beta chains.

It catalyses the reaction (1S,2R)-1-C-(indol-3-yl)glycerol 3-phosphate + L-serine = D-glyceraldehyde 3-phosphate + L-tryptophan + H2O. The protein operates within amino-acid biosynthesis; L-tryptophan biosynthesis; L-tryptophan from chorismate: step 5/5. Functionally, the alpha subunit is responsible for the aldol cleavage of indoleglycerol phosphate to indole and glyceraldehyde 3-phosphate. This chain is Tryptophan synthase alpha chain, found in Nitratidesulfovibrio vulgaris (strain DP4) (Desulfovibrio vulgaris).